We begin with the raw amino-acid sequence, 970 residues long: Protein translocase subunit SecA (970 aa).

ATP is bound by residues Gln-99, 117-121, and Asp-631; that span reads GEGKT.

Belongs to the SecA family. Monomer and homodimer. Part of the essential Sec protein translocation apparatus which comprises SecA, SecYEG and auxiliary proteins SecDF. Other proteins may also be involved.

The protein resides in the cell inner membrane. The protein localises to the cytoplasm. The enzyme catalyses ATP + H2O + cellular proteinSide 1 = ADP + phosphate + cellular proteinSide 2.. In terms of biological role, part of the Sec protein translocase complex. Interacts with the SecYEG preprotein conducting channel. Has a central role in coupling the hydrolysis of ATP to the transfer of proteins into and across the cell membrane, serving as an ATP-driven molecular motor driving the stepwise translocation of polypeptide chains across the membrane. This is Protein translocase subunit SecA from Chlamydia pneumoniae (Chlamydophila pneumoniae).